A 152-amino-acid polypeptide reads, in one-letter code: Clitocypin-2 (152 aa).

The protein belongs to the protease inhibitor I48 family. As to quaternary structure, homodimer. In terms of tissue distribution, expressed in all analyzed tissues, but expression was higher in the pileus and in the lower part of the stipe.

Functionally, binds and inhibits cysteine proteinases. Inhibits most strongly papain and cathepsin L, more weakly bromelain and cathepsin B while it is completely ineffective against cathepsin H. The protein is Clitocypin-2 (clt2) of Clitocybe nebularis (Clouded agaric).